The primary structure comprises 77 residues: Metallothionein-like protein type 2 (77 aa).

It belongs to the metallothionein superfamily. Type 15 family. In terms of tissue distribution, expressed in the left, stem and flower, at very low levels in roots and is not detectable in mesophyll protoplasts.

Metallothioneins have a high content of cysteine residues that bind various heavy metals. The chain is Metallothionein-like protein type 2 (MTI) from Vicia faba (Broad bean).